Here is a 282-residue protein sequence, read N- to C-terminus: Eukaryotic translation initiation factor 3 subunit G (282 aa).

Residues 1–27 are disordered; the sequence is MSSSKSLDWADDEDYGTGLPSIQTFDN. Phosphoserine occurs at positions 160 and 164. In terms of domain architecture, RRM spans 202 to 280; it reads ATLRVTNLSD…LILRCEFSKP (79 aa).

Belongs to the eIF-3 subunit G family. In terms of assembly, component of the eukaryotic translation initiation factor 3 (eIF-3) complex. The eIF-3 complex appears to include tif32/eif3a, SPAC25G10.08/eif3b, tif33/eif3c, SPBC4C3.07/eif3f, tif35/eif3g and sum1/eif3i. This set of common subunits may also associate exclusively with either moe1/eif3d and int6/eif3e, or with SPAC821.05/eif3h and SPAC1751.03/eif3m. The eIF-3 complex may also include SPAC3A12.13c/eif3j.

It localises to the cytoplasm. Its function is as follows. RNA-binding component of the eukaryotic translation initiation factor 3 (eIF-3) complex, which is involved in protein synthesis of a specialized repertoire of mRNAs and, together with other initiation factors, stimulates binding of mRNA and methionyl-tRNAi to the 40S ribosome. The eIF-3 complex specifically targets and initiates translation of a subset of mRNAs involved in cell proliferation. This subunit can bind 18S rRNA. The protein is Eukaryotic translation initiation factor 3 subunit G (tif35) of Schizosaccharomyces pombe (strain 972 / ATCC 24843) (Fission yeast).